The primary structure comprises 1299 residues: DNA-directed RNA polymerase subunit beta' (1299 aa).

Residues C60, C62, C75, and C78 each contribute to the Zn(2+) site. 3 residues coordinate Mg(2+): D535, D537, and D539. Residues C877, C954, C961, and C964 each contribute to the Zn(2+) site.

Belongs to the RNA polymerase beta' chain family. The RNAP catalytic core consists of 2 alpha, 1 beta, 1 beta' and 1 omega subunit. When a sigma factor is associated with the core the holoenzyme is formed, which can initiate transcription. Mg(2+) is required as a cofactor. The cofactor is Zn(2+).

It carries out the reaction RNA(n) + a ribonucleoside 5'-triphosphate = RNA(n+1) + diphosphate. In terms of biological role, DNA-dependent RNA polymerase catalyzes the transcription of DNA into RNA using the four ribonucleoside triphosphates as substrates. In Paenarthrobacter aurescens (strain TC1), this protein is DNA-directed RNA polymerase subunit beta'.